Reading from the N-terminus, the 164-residue chain is GTP-dependent dephospho-CoA kinase (164 aa).

Asp-40, Val-41, Val-42, Asp-59, Lys-61, and Glu-113 together coordinate GTP.

This sequence belongs to the GTP-dependent DPCK family.

The enzyme catalyses 3'-dephospho-CoA + GTP = GDP + CoA + H(+). The protein operates within cofactor biosynthesis; coenzyme A biosynthesis. Its function is as follows. Catalyzes the GTP-dependent phosphorylation of the 3'-hydroxyl group of dephosphocoenzyme A to form coenzyme A (CoA). This Sulfolobus acidocaldarius (strain ATCC 33909 / DSM 639 / JCM 8929 / NBRC 15157 / NCIMB 11770) protein is GTP-dependent dephospho-CoA kinase.